A 60-amino-acid chain; its full sequence is Small integral membrane protein 3 (60 aa).

The chain crosses the membrane as a helical span at residues 20 to 40 (IWVIVLIILATIVIMTSLLLC).

It localises to the membrane. The polypeptide is Small integral membrane protein 3 (SMIM3) (Homo sapiens (Human)).